A 95-amino-acid chain; its full sequence is Large ribosomal subunit protein bL27 (95 aa).

Residues Met-1 to Phe-8 constitute a propeptide that is removed on maturation. The disordered stretch occupies residues Met-1 to Asp-34.

Belongs to the bacterial ribosomal protein bL27 family. Post-translationally, the N-terminus is cleaved by ribosomal processing cysteine protease Prp.

In Pediococcus pentosaceus (strain ATCC 25745 / CCUG 21536 / LMG 10740 / 183-1w), this protein is Large ribosomal subunit protein bL27.